Consider the following 1835-residue polypeptide: AT-rich interactive domain-containing protein 2 (1835 aa).

Ala-2 is modified (N-acetylalanine). Ser-4 carries the post-translational modification Phosphoserine. Glycyl lysine isopeptide (Lys-Gly) (interchain with G-Cter in SUMO2) cross-links involve residues Lys-7, Lys-15, and Lys-119. Residues Arg-13 to His-105 enclose the ARID domain. Positions Leu-313–Leu-317 match the LXXLL motif. Positions Ala-524–Ala-603 form a DNA-binding region, RFX-type winged-helix. A Glycyl lysine isopeptide (Lys-Gly) (interchain with G-Cter in SUMO2) cross-link involves residue Lys-555. Residues Ser-631 and Ser-635 each carry the phosphoserine modification. Thr-653 bears the Phosphothreonine mark. At Ser-689 the chain carries Phosphoserine. Thr-692 carries the phosphothreonine modification. Disordered stretches follow at residues Gln-819–Asp-844, Leu-962–Ser-1057, Met-1266–Glu-1287, Asn-1295–Ser-1314, and Leu-1321–Ser-1341. 3 stretches are compositionally biased toward low complexity: residues Thr-823–Gln-843, Pro-985–Ser-996, and Gln-1025–Gln-1044. Residue Ser-1300 is modified to Phosphoserine. A compositionally biased stretch (polar residues) spans Asp-1301 to Ser-1314. Phosphoserine is present on residues Ser-1391 and Ser-1496. Disordered stretches follow at residues Asp-1488 to Thr-1522 and Ser-1572 to Gly-1629. Residues Ser-1491–Thr-1509 are compositionally biased toward polar residues. The segment covering Lys-1513–Thr-1522 has biased composition (basic and acidic residues). Residues Ala-1573 to Asn-1592 show a composition bias toward polar residues. The span at Gln-1602–Asp-1623 shows a compositional bias: low complexity. A C2H2-type zinc finger spans residues Phe-1632–His-1657. Residues Lys-1701, Lys-1716, and Lys-1731 each participate in a glycyl lysine isopeptide (Lys-Gly) (interchain with G-Cter in SUMO2) cross-link. The disordered stretch occupies residues Asp-1703–Arg-1728. A compositionally biased stretch (polar residues) spans Ala-1708 to Arg-1728.

Component of the SWI/SNF-B (PBAF) chromatin remodeling complex, at least composed of SMARCA4/BRG1, SMARCB1/BAF47/SNF5, ACTL6A/BAF53A or ACTL6B/BAF53B, SMARCE1/BAF57, SMARCD1/BAF60A, SMARCD2/BAF60B, perhaps SMARCD3/BAF60C, SMARCC1/BAF155, SMARCC2/BAF170, PBRM1/BAF180, ARID2/BAF200 and actin. Interacts with SRF. Forms complexes with SRF and SRF cofactors MYOCD, NKX2-5 and SRFBP1. As to expression, highly expressed in heart.

Its subcellular location is the nucleus. Functionally, involved in transcriptional activation and repression of select genes by chromatin remodeling (alteration of DNA-nucleosome topology). Required for the stability of the SWI/SNF chromatin remodeling complex SWI/SNF-B (PBAF). May be involved in targeting the complex to different genes. May be involved in regulating transcriptional activation of cardiac genes. This is AT-rich interactive domain-containing protein 2 from Homo sapiens (Human).